Here is a 612-residue protein sequence, read N- to C-terminus: Alpha-1,3-galactosidase B (612 aa).

An N-terminal signal peptide occupies residues 1–19 (MKWYLWGAVVLLYSLFGSA). Cysteine 20 carries the N-palmitoyl cysteine lipid modification. Cysteine 20 carries the S-diacylglycerol cysteine lipid modification. PbH1 repeat units follow at residues 431–453 (TPTV…LFST), 454–476 (PRQT…LLCG), and 487–536 (CRNV…VIDA).

The protein belongs to the glycosyl hydrolase 110 family. B subfamily.

It is found in the cell membrane. The catalysed reaction is Hydrolysis of terminal, non-reducing branched (1-&gt;3)-alpha-D-galactosidic residues, producing free D-galactose.. The enzyme catalyses Hydrolysis of terminal, non-reducing linear (1-&gt;3)-alpha-D-galactosidic residues, producing free D-galactose.. It catalyses the reaction Hydrolysis of terminal, non-reducing alpha-D-galactose residues in alpha-D-galactosides, including galactose oligosaccharides, galactomannans and galactolipids.. Alpha-galactosidase. Removes both branched alpha-1,3-linked galactose residues of blood group B antigens and linear alpha-1,3-linked galactose structures. The sequence is that of Alpha-1,3-galactosidase B (glaB) from Parabacteroides distasonis (strain ATCC 8503 / DSM 20701 / CIP 104284 / JCM 5825 / NCTC 11152).